The chain runs to 176 residues: Peptide deformylase (176 aa).

Cysteine 94 and histidine 136 together coordinate Fe cation. Residue glutamate 137 is part of the active site. Histidine 140 is a binding site for Fe cation.

Belongs to the polypeptide deformylase family. Requires Fe(2+) as cofactor.

The enzyme catalyses N-terminal N-formyl-L-methionyl-[peptide] + H2O = N-terminal L-methionyl-[peptide] + formate. Removes the formyl group from the N-terminal Met of newly synthesized proteins. Requires at least a dipeptide for an efficient rate of reaction. N-terminal L-methionine is a prerequisite for activity but the enzyme has broad specificity at other positions. This is Peptide deformylase from Bartonella henselae (strain ATCC 49882 / DSM 28221 / CCUG 30454 / Houston 1) (Rochalimaea henselae).